A 321-amino-acid chain; its full sequence is Geranylgeranyl transferase type-2 subunit beta 1 (321 aa).

Position 2 is an N-acetylserine (Ser2). 6 PFTB repeats span residues 14-55, 62-103, 110-151, 158-199, 206-247, and 254-296; these read ADKH…DLLD, EEEV…ALFD, IGKV…SILK, VEKA…AITG, KDSL…IMID, and KAKL…SLLE. Geranylgeranyl diphosphate-binding positions include 184–186 and 226–229; these read HAG and RPEK. Positions 232 and 234 each coordinate Zn(2+). Residue 235-238 participates in geranylgeranyl diphosphate binding; sequence YSWW. Position 284 (His284) interacts with Zn(2+).

It belongs to the protein prenyltransferase subunit beta family. As to quaternary structure, heterotrimer composed of the alpha subunit RGTA, the beta subunit RGTB and REP; within this trimer, RGTA and RGTB form the catalytic component, while REP mediates peptide substrate binding. The cofactor is Zn(2+). Mg(2+) serves as cofactor.

The catalysed reaction is geranylgeranyl diphosphate + L-cysteinyl-[protein] = S-geranylgeranyl-L-cysteinyl-[protein] + diphosphate. Its activity is regulated as follows. The enzymatic reaction requires the aid of the Rab escort protein REP. Functionally, catalyzes the transfer of a geranylgeranyl moiety from geranylgeranyl diphosphate to both cysteines of Rab proteins with the C-terminal sequence -CCXX, CXXX, -XCCX and -XCXC, such as RABA1A, RABA2A, RABF2A and RABG2. Involved in the geranylgeranylation of RABA2A. In vitro, can prenylate PGGTI targets with the C-terminal sequence Cys-aliphatic-aliphatic-X (CaaX) with leucine in the terminal position. Substrates with the C-terminal sequence -CSIL such as ARAC11/ROP1 or GG2/AGG2 are prenylated independently of REP and when the beta subunit is associated with the alpha subunit RGTA1. In terms of biological role, required for male fertility and root tip growth. This Arabidopsis thaliana (Mouse-ear cress) protein is Geranylgeranyl transferase type-2 subunit beta 1.